Consider the following 441-residue polypeptide: Capsid protein (441 aa).

Positions 26–63 (DSKKKQPIYQNSSESEESETENKNFIYDFSSEEDFEEP) are disordered. Positions 77-79 (KRK) match the Nuclear localization signal motif. Residues 381-398 (CQCWLCHEEGHYANECPK) form a CCHC-type zinc finger.

The protein belongs to the caulimoviridae capsid protein family. In terms of assembly, interacts (via nuclear localization signal) with host importin alpha.

Its subcellular location is the virion. The protein localises to the host nucleus. Its function is as follows. Self assembles to form an icosahedral capsid, about 50 nm in diameter, nm, composed of 420 subunits of the viral capsid protein. The capsid encapsulates the genomic dsDNA. Following virus entry into host cell, provides nuclear import of the viral genome. Virus particles do not enter the nucleus, but dock at the nuclear membrane through the interaction with host importins. The sequence is that of Capsid protein from Soybean chlorotic mottle virus.